The chain runs to 87 residues: Small ribosomal subunit protein bS20 (87 aa).

Positions 1–29 (MANTAQARKRARQAVKQNAHNSSQRSTLR) are disordered. Residues 20–29 (HNSSQRSTLR) show a composition bias toward polar residues.

Belongs to the bacterial ribosomal protein bS20 family.

In terms of biological role, binds directly to 16S ribosomal RNA. The sequence is that of Small ribosomal subunit protein bS20 from Janthinobacterium sp. (strain Marseille) (Minibacterium massiliensis).